A 177-amino-acid chain; its full sequence is ATP-dependent protease subunit HslV (177 aa).

T6 is a catalytic residue. Residues S161, C164, and T167 each coordinate Na(+).

The protein belongs to the peptidase T1B family. HslV subfamily. In terms of assembly, a double ring-shaped homohexamer of HslV is capped on each side by a ring-shaped HslU homohexamer. The assembly of the HslU/HslV complex is dependent on binding of ATP.

It localises to the cytoplasm. The catalysed reaction is ATP-dependent cleavage of peptide bonds with broad specificity.. With respect to regulation, allosterically activated by HslU binding. Functionally, protease subunit of a proteasome-like degradation complex believed to be a general protein degrading machinery. The polypeptide is ATP-dependent protease subunit HslV (Thermodesulfovibrio yellowstonii (strain ATCC 51303 / DSM 11347 / YP87)).